The primary structure comprises 447 residues: Mannose/glucose-specific lectin (447 aa).

Jacalin-type lectin domains lie at 5 to 148 (MISV…FVKP), 153 to 294 (TISF…YVKP), and 300 to 443 (SISI…FVKP).

It belongs to the jacalin lectin family. In terms of tissue distribution, expressed in seeds (at protein level).

Hemagglutinating activity is slightly inhibited by alpha-methyl-D-mannopyranoside. Functionally, D-mannose/D-glucose-binding lectin that also binds derivatives N-acetyl-D-glucosamine and alpha-methyl-D-mannopyranoside. Does not bind D-galactose, L-Rhamnose, D-fructose, lactose or glycoproteins fetiun and mucin. Shows agglutinating activity towards human and rabbit erythrocytes. Also displays antimicrobial activity against L.infantum. This chain is Mannose/glucose-specific lectin, found in Parkia pendula (Inga pendula).